Here is a 336-residue protein sequence, read N- to C-terminus: Ornithine carbamoyltransferase, catabolic (336 aa).

Carbamoyl phosphate contacts are provided by residues 62-65, glutamine 89, arginine 113, and 140-143; these read STRT and HPTQ. L-ornithine is bound by residues asparagine 172, aspartate 236, and 240–241; that span reads SM. Carbamoyl phosphate contacts are provided by residues 277 to 278 and arginine 322; that span reads CL.

The protein belongs to the aspartate/ornithine carbamoyltransferase superfamily. OTCase family.

The protein localises to the cytoplasm. The catalysed reaction is carbamoyl phosphate + L-ornithine = L-citrulline + phosphate + H(+). Its pathway is amino-acid degradation; L-arginine degradation via ADI pathway; carbamoyl phosphate from L-arginine: step 2/2. Its function is as follows. Reversibly catalyzes the transfer of the carbamoyl group from carbamoyl phosphate (CP) to the N(epsilon) atom of ornithine (ORN) to produce L-citrulline. The polypeptide is Ornithine carbamoyltransferase, catabolic (Staphylococcus aureus (strain MSSA476)).